Here is a 463-residue protein sequence, read N- to C-terminus: Nitrogenase iron-molybdenum cofactor biosynthesis protein NifE (463 aa).

It belongs to the NifD/NifK/NifE/NifN family.

It functions in the pathway cofactor biosynthesis; Fe-Mo cofactor biosynthesis. Functionally, this protein may play a role in the biosynthesis of the prosthetic group of nitrogenase (FeMo cofactor). The polypeptide is Nitrogenase iron-molybdenum cofactor biosynthesis protein NifE (nifE2) (Methanosarcina barkeri).